The chain runs to 460 residues: Transcriptional regulatory protein UME1 (460 aa).

The short motif at 14–22 (NEEFKIWKK) is the NEE-box element. WD repeat units follow at residues 233 to 271 (PGIK…KPLW), 276 to 316 (SLDG…ALGD), 339 to 379 (FYSE…AIYN), and 411 to 451 (GENN…VLDG).

As to quaternary structure, component of the RPD3C(L) complex composed of at least ASH1, CTI6, DEP1, PHO23, RPD3, RXT2, RXT3, SAP30, SDS3, SIN3, UME1 and UME6. Component of the RPD3C(S) complex composed of at least EAF3, RCO1, RPD3, SIN3, and UME1. Interacts with RPD3.

It is found in the cytoplasm. Its subcellular location is the nucleus. Functionally, catalytic component of the RPD3 histone deacetylase complexes RPD3C(L) and RPD3C(S) responsible for the deacetylation of lysine residues on the N-terminal part of the core histones (H2A, H2B, H3 and H4). Histone deacetylation gives a tag for epigenetic repression and plays an important role in transcriptional regulation, cell cycle progression and developmental events. The sequence is that of Transcriptional regulatory protein UME1 (UME1) from Saccharomyces cerevisiae (strain ATCC 204508 / S288c) (Baker's yeast).